A 311-amino-acid polypeptide reads, in one-letter code: MNNGTSPAGGETEATQTRSGFVALIGAPNAGKSTLVNQLVGTKVSIVTHKVQTTRALVRGIFIEGPAQIVLVDTPGIFRPKRRLDRAMVTTAWGGAKDADIILVIIDAQGGFNENAEALLESMKDVRQKKVLVLNKVDRVDPPVLLSLAQKANGLVPFDRTFMISALNGSGCKDLAKYLAESVPNGPWYYPEDQISDMPMRQLAAEITREKLYLRLHEELPYASTVETERWEERKDGSVRIEQVIYVERESQKKIVLGHKGETVKAIGQAARKEISEILEQTVHQFLFVKVRENWGNDPERYREMGLDFPT.

One can recognise an Era-type G domain in the interval 18–185 (RSGFVALIGA…AKYLAESVPN (168 aa)). Residues 26-33 (GAPNAGKS) form a G1 region. 26–33 (GAPNAGKS) lines the GTP pocket. Residues 52 to 56 (QTTRA) are G2. The interval 73-76 (DTPG) is G3. GTP is bound by residues 73–77 (DTPGI) and 135–138 (NKVD). Residues 135–138 (NKVD) form a G4 region. Residues 164–166 (ISA) are G5. Residues 216–293 (LHEELPYAST…HQFLFVKVRE (78 aa)) form the KH type-2 domain.

It belongs to the TRAFAC class TrmE-Era-EngA-EngB-Septin-like GTPase superfamily. Era GTPase family. In terms of assembly, monomer.

Its subcellular location is the cytoplasm. The protein localises to the cell inner membrane. In terms of biological role, an essential GTPase that binds both GDP and GTP, with rapid nucleotide exchange. Plays a role in 16S rRNA processing and 30S ribosomal subunit biogenesis and possibly also in cell cycle regulation and energy metabolism. The protein is GTPase Era of Brucella melitensis biotype 1 (strain ATCC 23456 / CCUG 17765 / NCTC 10094 / 16M).